The following is a 231-amino-acid chain: ATP synthase subunit a (231 aa).

The next 5 membrane-spanning stretches (helical) occupy residues 14-34, 78-98, 107-127, 174-194, and 196-216; these read GFLK…VLAV, YLGF…CTVI, SLST…FFGI, MIIG…MTAL, and LLTG…YIAA.

It belongs to the ATPase A chain family. As to quaternary structure, F-type ATPases have 2 components, CF(1) - the catalytic core - and CF(0) - the membrane proton channel. CF(1) has five subunits: alpha(3), beta(3), gamma(1), delta(1), epsilon(1). CF(0) has three main subunits: a(1), b(2) and c(9-12). The alpha and beta chains form an alternating ring which encloses part of the gamma chain. CF(1) is attached to CF(0) by a central stalk formed by the gamma and epsilon chains, while a peripheral stalk is formed by the delta and b chains.

The protein resides in the cell inner membrane. In terms of biological role, key component of the proton channel; it plays a direct role in the translocation of protons across the membrane. The protein is ATP synthase subunit a of Albidiferax ferrireducens (strain ATCC BAA-621 / DSM 15236 / T118) (Rhodoferax ferrireducens).